We begin with the raw amino-acid sequence, 809 residues long: Lethal factor (809 aa).

An N-terminal signal peptide occupies residues 1 to 33; that stretch reads MNIKKEFIKVISMSCLVTAITLSGPVFIPLVQG. The interval 39–66 is disordered; it reads DVGMHVKEKEKNKDENKRKDEERNKTQE. Residues 40 to 66 are compositionally biased toward basic and acidic residues; the sequence is VGMHVKEKEKNKDENKRKDEERNKTQE. The interval 60–295 is i; PA-binding region; that stretch reads ERNKTQEEHL…NLSLEELKDQ (236 aa). The ATLF-like 1 domain occupies 70 to 282; sequence KEIMKHIVKI…AFNYMDKFNE (213 aa). Residues 296–330 form an IIA region; that stretch reads RMLARYEKWEKIKQHYQHWSDSLSEEGRGLLKKLQ. 5 tandem repeats follow at residues 315 to 333, 342 to 357, 360 to 378, 380 to 397, and 399 to 416. A 5 X approximate repeats region spans residues 315–416; it reads SDSLSEEGRG…EFLKKLKLDI (102 aa). Residues 336–416 form an III region; it reads KKDDIIHSLS…EFLKKLKLDI (81 aa). Residues 420–583 are IIB; it reads DINQRLQDTG…EYIRIDAKVV (164 aa). The IV stretch occupies residues 585–809; it reads KSKIDTKIQE…NDQIKFIINS (225 aa). Positions 609–804 constitute an ATLF-like 2 domain; the sequence is LPKYTKLITF…TFQFINDQIK (196 aa). H719 is a binding site for Zn(2+). Residue E720 is the Proton acceptor of the active site. Residues H723, Y761, and E768 each contribute to the Zn(2+) site.

Belongs to the peptidase M34 family. Interacts (via ATLF domain 1) with the cleaved form of protective antigen (PA-63) anthrax toxin; interaction is required for LF translocation into the host cytoplasm. Interacts with PA-63 homooligomers (either homoheptamers or homooctamers): three molecules of LF bind the PA-63 homoheptamer to form the PA(7)LF(3) complex, in which the relative position of the N-terminal alpha-helices in the three LFs determines which factor is translocated first. The cofactor is Zn(2+).

It localises to the secreted. The protein resides in the host cytoplasm. It is found in the host cytosol. It catalyses the reaction Preferred amino acids around the cleavage site can be denoted BBBBxHx-|-H, in which B denotes Arg or Lys, H denotes a hydrophobic amino acid, and x is any amino acid. The only known protein substrates are mitogen-activated protein (MAP) kinase kinases.. Its activity is regulated as follows. Inhibited by NSC-12155 (1,3-Bis(2-methyl-4-aminoquinoline-6-yl)ure). Inhibited by phenoxyacetic acid bearing alpha-benzyl substituents on the C2-side chain. Inhibited by sulfonamide hydroxamate with benzylic additions at the sulfonamide nitrogen. Also inhibited by sulfonamide hydroxamates with alkylation at the sulfonamide nitrogen. Inhibited by hydroxamic acid inhibitors. Functionally, lethal factor (LF), which constitutes one of the three proteins composing the anthrax toxin, is able to trigger rapid cell death in macrophages. Acts as a protease that cleaves the N-terminal of most dual specificity mitogen-activated protein kinase kinases (MAPKKs or MAP2Ks) (except for MAP2K5): cleavage invariably occurs within the N-terminal proline-rich region preceding the kinase domain, thus disrupting a sequence involved in directing specific protein-protein interactions necessary for the assembly of signaling complexes. Also cleaves mouse Nlrp1b: host Nlrp1b cleavage promotes ubiquitination and degradation of the N-terminal part of Nlrp1b by the proteasome, thereby releasing the cleaved C-terminal part of Nlrp1b, which polymerizes and forms the Nlrp1b inflammasome followed by host cell pyroptosis. Able to cleave mouse Nlrp1b alleles 1 and 5, while it is not able to cleave Nlrp1b alleles 2, 3 and 4. In contrast, does not cleave NLRP1 human ortholog. LF is not toxic by itself and only acts as a lethal factor when associated with protective antigen (PA) to form the lethal toxin (LeTx): PA is required for LF translocation into the host cytosol. The sequence is that of Lethal factor from Bacillus anthracis.